We begin with the raw amino-acid sequence, 276 residues long: NADPH-dependent 7-cyano-7-deazaguanine reductase (276 aa).

80–82 contacts substrate; the sequence is VES. 82–83 is an NADPH binding site; it reads SK. Catalysis depends on Cys-183, which acts as the Thioimide intermediate. Asp-190 serves as the catalytic Proton donor. A substrate-binding site is contributed by 222–223; it reads HE. 251–252 lines the NADPH pocket; it reads RG.

The protein belongs to the GTP cyclohydrolase I family. QueF type 2 subfamily. In terms of assembly, homodimer.

It is found in the cytoplasm. The catalysed reaction is 7-aminomethyl-7-carbaguanine + 2 NADP(+) = 7-cyano-7-deazaguanine + 2 NADPH + 3 H(+). The protein operates within tRNA modification; tRNA-queuosine biosynthesis. Catalyzes the NADPH-dependent reduction of 7-cyano-7-deazaguanine (preQ0) to 7-aminomethyl-7-deazaguanine (preQ1). The chain is NADPH-dependent 7-cyano-7-deazaguanine reductase from Burkholderia orbicola (strain MC0-3).